Consider the following 497-residue polypeptide: NAD(P)H-quinone oxidoreductase chain 4, chloroplastic (497 aa).

13 consecutive transmembrane segments (helical) span residues 4-24, 35-55, 87-107, 113-133, 134-154, 167-187, 207-227, 242-262, 274-294, 313-333, 386-406, 416-436, and 462-482; these read LPWLTIIVLLPICAGLLIPLF, YTLGICIIEFLLITYIFCCHF, MGLILLTGFVTTLATLAAWPV, LFHFLMLAMYSGQIGLFASQD, ILLFFFMWELELIPIYLLLSI, FILYTAGGSIFLLIGALTIGL, IALEIIIYSGFLIAYAVKLPI, HYSTCMLLAGILLKMGGYGLI, AIFAPWMVMFGAVQIVYASLI, MGFVMIGIGSLTNIGLNGAIL, LALPGMSGFVAELMVFLGIVI, IVITIIEAIGIILTPIYLLSM, and IFISLCLLLPIIGIGLYPNLV.

Belongs to the complex I subunit 4 family.

It localises to the plastid. Its subcellular location is the chloroplast thylakoid membrane. The enzyme catalyses a plastoquinone + NADH + (n+1) H(+)(in) = a plastoquinol + NAD(+) + n H(+)(out). It catalyses the reaction a plastoquinone + NADPH + (n+1) H(+)(in) = a plastoquinol + NADP(+) + n H(+)(out). The chain is NAD(P)H-quinone oxidoreductase chain 4, chloroplastic from Angiopteris evecta (Mule's foot fern).